The primary structure comprises 1440 residues: Bridge-like lipid transfer protein family member 3A (1440 aa).

One can recognise a Chorein N-terminal domain in the interval 3–95 (GIIKKQILKH…KVEVEMKTCE (93 aa)). 3 disordered regions span residues 267–307 (SAHQ…NSSS), 430–456 (ADSLSSPRKNPLERSPSQGRQPAFQPP), and 751–780 (KPSASFGSPVQSEALAPDSMSHPRSKTEHD). Residues 287-307 (SAQQSWAQAFGGSQGNSNSSS) are compositionally biased toward low complexity. 4 positions are modified to phosphoserine: S444, S446, S755, and S758. Residues 837-860 (ALLRLKEVLQRLQEQLTKDTESMT) are a coiled coil. The segment at 891–1008 (VDADSAGSDS…ETAVNGQGEL (118 aa)) is disordered. Basic and acidic residues predominate over residues 911-920 (SEDRELKSDA). Residues 985 to 995 (ASSSPAALKPP) show a composition bias toward low complexity. A phosphoserine mark is found at S988, S1103, and S1106. The segment at 1106-1180 (SFDGVSLDSS…SPAANSSVSP (75 aa)) is disordered. Low complexity predominate over residues 1134–1150 (LLESESGPESVPPGSLS). Residues 1151-1180 (NVSDNAGVQGSPLVNNYGQGSPAANSSVSP) show a composition bias toward polar residues. A coiled-coil region spans residues 1401 to 1435 (KELPILQKELIETKQALANANQDKEKLLQEIRKYN).

In terms of assembly, homodimer (Potential). Interacts with UHRF1.

Its subcellular location is the late endosome. Functionally, tube-forming lipid transport protein which probably mediates the transfer of lipids between membranes at organelle contact sites. May be involved in the retrograde traffic of vesicle clusters in the endocytic pathway to the Golgi complex. In Homo sapiens (Human), this protein is Bridge-like lipid transfer protein family member 3A.